Here is a 393-residue protein sequence, read N- to C-terminus: Chalcone synthase LF2 (393 aa).

Cys-164 is an active-site residue.

The protein belongs to the thiolase-like superfamily. Chalcone/stilbene synthases family.

The catalysed reaction is (E)-4-coumaroyl-CoA + 3 malonyl-CoA + 3 H(+) = 2',4,4',6'-tetrahydroxychalcone + 3 CO2 + 4 CoA. It participates in secondary metabolite biosynthesis; flavonoid biosynthesis. Functionally, the primary product of this enzyme is 4,2',4',6'-tetrahydroxychalcone (also termed naringenin-chalcone or chalcone) which can under specific conditions spontaneously isomerize into naringenin. In Ipomoea batatas (Sweet potato), this protein is Chalcone synthase LF2 (CHS-LF2).